Reading from the N-terminus, the 187-residue chain is Elongation factor P (187 aa).

The protein belongs to the elongation factor P family.

It is found in the cytoplasm. It participates in protein biosynthesis; polypeptide chain elongation. In terms of biological role, involved in peptide bond synthesis. Stimulates efficient translation and peptide-bond synthesis on native or reconstituted 70S ribosomes in vitro. Probably functions indirectly by altering the affinity of the ribosome for aminoacyl-tRNA, thus increasing their reactivity as acceptors for peptidyl transferase. The sequence is that of Elongation factor P from Mycobacterium sp. (strain JLS).